Consider the following 325-residue polypeptide: Probable NADH kinase (325 aa).

The protein belongs to the NAD kinase family. As to quaternary structure, homodimer.

The protein localises to the cytoplasm. The enzyme catalyses NADH + ATP = ADP + NADPH + H(+). In terms of biological role, key source of the cellular reductant NADPH which is an important antioxidant factor. The sequence is that of Probable NADH kinase from Oryza sativa subsp. japonica (Rice).